The following is a 485-amino-acid chain: NADH-quinone oxidoreductase subunit N (485 aa).

14 helical membrane-spanning segments follow: residues 10-30 (ILPE…GLFL), 40-60 (IFFQ…EYLI), 71-91 (VVFS…AVFV), 107-127 (GDFY…TAAH), 129-149 (LVTI…LIAI), 164-184 (FVLG…VYGM), 209-229 (FLLV…GAFP), 248-268 (IVAT…LFVG), 276-296 (WIYL…LVAL), 304-324 (LLGY…TLNP), 336-356 (VIVY…ISVG), 377-397 (AFIL…GGFI), 410-430 (GNYF…FYYV), and 454-474 (LIAL…PMLL).

The protein belongs to the complex I subunit 2 family. NDH-1 is composed of 14 different subunits. Subunits NuoA, H, J, K, L, M, N constitute the membrane sector of the complex.

It is found in the cell inner membrane. It catalyses the reaction a quinone + NADH + 5 H(+)(in) = a quinol + NAD(+) + 4 H(+)(out). NDH-1 shuttles electrons from NADH, via FMN and iron-sulfur (Fe-S) centers, to quinones in the respiratory chain. The immediate electron acceptor for the enzyme in this species is believed to be ubiquinone. Couples the redox reaction to proton translocation (for every two electrons transferred, four hydrogen ions are translocated across the cytoplasmic membrane), and thus conserves the redox energy in a proton gradient. This is NADH-quinone oxidoreductase subunit N from Francisella tularensis subsp. holarctica (strain FTNF002-00 / FTA).